The primary structure comprises 708 residues: F-box protein MAX2 homolog A (708 aa).

Positions 2-49 (ATQLNDLPDVILSNIIAAVTDVRSRNSTSFVCRKWLVLERSTRVSLTL) constitute an F-box domain.

Part of a putative SCF (SKP1/Cullin/F-box) ubiquitin ligase complex. Interacts with DAD2. Interacts with KAI2IA in the presence of (-)-germacrene D. As to expression, mainly expressed in fully expanded leaves, lateral roots, axillary and shoot apex, and, to a lower extent, in internodes and nodes.

It is found in the nucleus. Component of SCF(ASK-cullin-F-box) E3 ubiquitin ligase complexes, which may mediate the ubiquitination and subsequent proteasomal degradation of target proteins. Is necessary for responses to strigolactones and may be involved in the ubiquitin-mediated degradation of specific proteins that activate axillary growth. Targets probably SMAX1A to degradation upon the formation of an E3 SCF ubiquitin ligase complex (ASK-cullin-F-box) containing MAX2A and KAI2IA in response to (-)-germacrene D in the stigma. The sequence is that of F-box protein MAX2 homolog A from Petunia hybrida (Petunia).